The chain runs to 469 residues: Adenosylhomocysteinase (469 aa).

Residues threonine 63, aspartate 139, and glutamate 164 each contribute to the substrate site. NAD(+) is bound at residue threonine 165–threonine 167. The substrate site is built by lysine 194 and aspartate 198. NAD(+)-binding positions include asparagine 199, glycine 228–glycine 233, glutamate 251, asparagine 300, isoleucine 321–histidine 323, and asparagine 375.

The protein belongs to the adenosylhomocysteinase family. NAD(+) is required as a cofactor.

Its subcellular location is the cytoplasm. It carries out the reaction S-adenosyl-L-homocysteine + H2O = L-homocysteine + adenosine. It functions in the pathway amino-acid biosynthesis; L-homocysteine biosynthesis; L-homocysteine from S-adenosyl-L-homocysteine: step 1/1. In terms of biological role, may play a key role in the regulation of the intracellular concentration of adenosylhomocysteine. This Pseudomonas aeruginosa (strain UCBPP-PA14) protein is Adenosylhomocysteinase.